We begin with the raw amino-acid sequence, 315 residues long: Probable HTH-type transcriptional regulator SinR (315 aa).

Residues 8–65 (RGMRDWMIFIKVAEVGNLSRAARELDISISAVSKSLSRLENSIEVTLLRRDSHHLELT) enclose the HTH lysR-type domain. The segment at residues 25 to 44 (LSRAARELDISISAVSKSLS) is a DNA-binding region (H-T-H motif).

Belongs to the LysR transcriptional regulatory family.

In terms of biological role, probable regulatory protein. Its target is not known. The chain is Probable HTH-type transcriptional regulator SinR (sinR) from Salmonella typhimurium (strain LT2 / SGSC1412 / ATCC 700720).